Here is a 184-residue protein sequence, read N- to C-terminus: Threonylcarbamoyl-AMP synthase (184 aa).

The YrdC-like domain maps to 3-184 (AWFIQKAVSV…DAATGAILRQ (182 aa)).

Belongs to the SUA5 family. TsaC subfamily.

It localises to the cytoplasm. The catalysed reaction is L-threonine + hydrogencarbonate + ATP = L-threonylcarbamoyladenylate + diphosphate + H2O. Its function is as follows. Required for the formation of a threonylcarbamoyl group on adenosine at position 37 (t(6)A37) in tRNAs that read codons beginning with adenine. Catalyzes the conversion of L-threonine, HCO(3)(-)/CO(2) and ATP to give threonylcarbamoyl-AMP (TC-AMP) as the acyladenylate intermediate, with the release of diphosphate. This Hahella chejuensis (strain KCTC 2396) protein is Threonylcarbamoyl-AMP synthase.